Here is an 88-residue protein sequence, read N- to C-terminus: MEGRRFAAVLILPICMLAPGAVASKRWTRPSVCNLPAESGTGTQSLKRFYYNSDKMQCRTFIYKGNGGNDNNFPRTYDCQKKCLYRPG.

A signal peptide spans 1-23 (MEGRRFAAVLILPICMLAPGAVA). In terms of domain architecture, BPTI/Kunitz inhibitor spans 33-83 (CNLPAESGTGTQSLKRFYYNSDKMQCRTFIYKGNGGNDNNFPRTYDCQKKC). Disulfide bonds link C33/C83 and C58/C79. P87 is subject to Proline amide.

It belongs to the venom Kunitz-type family. Post-translationally, contains 2 disulfide bonds instead of 3, as for all Kunitz domain proteins. As to expression, expressed by the venom duct.

The protein localises to the secreted. Blocks specifically voltage-activated potassium channels (Kv) of the Shaker family. The sequence is that of Kunitz-type conkunitzin-B1 from Conus bullatus (Bubble cone).